We begin with the raw amino-acid sequence, 462 residues long: Sugar transporter ERD6-like 2 (462 aa).

12 helical membrane passes run 23–43, 70–90, 96–116, 123–143, 156–176, 178–198, 261–281, 296–316, 324–344, 357–377, 397–417, and 423–443; these read SGLLLSTSVVVAGSFCYGCAM, VMTLGGMITAVFSGKISALVG, WISDVCCIFGWLAVAFAHDII, LFLGFGVGLISYVVPVYIAEI, NQLLQCLGISLMFFTGNFFHW, TLALLSAIPSAFQVICLFFIP, LIIGLGLMLLQQFCGSAAISA, IGTTILAVILIPQSIVVMLTV, LLMISSIGMCICSFFIGLSYY, VMLIVGLVGYVSSFGIGLGGL, LVTMSNWFFNWIIIYSFNFMI, and GTYFIFSGVSLVTIVFIWTLV.

Belongs to the major facilitator superfamily. Sugar transporter (TC 2.A.1.1) family.

The protein resides in the membrane. Its function is as follows. Sugar transporter. This is Sugar transporter ERD6-like 2 (SUGTL3) from Arabidopsis thaliana (Mouse-ear cress).